A 130-amino-acid chain; its full sequence is Small ribosomal subunit protein uS8 (130 aa).

It belongs to the universal ribosomal protein uS8 family. As to quaternary structure, part of the 30S ribosomal subunit. Contacts proteins S5 and S12.

In terms of biological role, one of the primary rRNA binding proteins, it binds directly to 16S rRNA central domain where it helps coordinate assembly of the platform of the 30S subunit. This chain is Small ribosomal subunit protein uS8, found in Buchnera aphidicola subsp. Acyrthosiphon kondoi (Acyrthosiphon kondoi symbiotic bacterium).